A 72-amino-acid chain; its full sequence is Conotoxin VnMKLT2-021 (72 aa).

Residues 1-22 form the signal peptide; it reads MKLTCVLIVAVLFLTACQLTTA. A propeptide spanning residues 23–45 is cleaved from the precursor; it reads ASYARSEREHPDLGSSDQNSKLT. The segment at 25 to 44 is disordered; sequence YARSEREHPDLGSSDQNSKL. 3 cysteine pairs are disulfide-bonded: Cys48-Cys62, Cys55-Cys66, and Cys61-Cys71.

This sequence belongs to the conotoxin O1 superfamily. As to expression, expressed by the venom duct.

Its subcellular location is the secreted. In Conus ventricosus (Mediterranean cone), this protein is Conotoxin VnMKLT2-021.